The following is a 136-amino-acid chain: Non-structural protein 1 (136 aa).

It belongs to the pneumovirus non-structural protein 1 family. As to quaternary structure, monomer. Homomultimer. Heteromultimer with NS2. Interacts with the matrix protein M. Interacts with host ELOC and CUL2; this interaction allows NS1 to form an active E3 ligase with ELOC and CUL2. Interacts with host IRF3; this interaction leads to the disrupted association of IRF3 with CREBBP and thus reduced binding of IRF3 to the IFN-beta promoter. Interacts with host MAVS; this interaction prevents MAVS binding to RIGI and inhibits signaling pathway leading to interferon production. Interacts with host TRIM25 (via SPRY domain); this interaction suppresses RIGI ubiquitination and results in decreased interaction between RIGI and MAVS.

Its subcellular location is the host cytoplasm. It is found in the host mitochondrion. It localises to the host nucleus. Functionally, plays a major role in antagonizing the type I IFN-mediated antiviral response by degrading or inhibiting multiple cellular factors required for either IFN induction or response pathways. Acts cooperatively with NS2 to repress activation and nuclear translocation of host IFN-regulatory factor IRF3. Also disrupts the association of IRF3 with CREBBP. Interacts with host mitochondrial-associated membrane (MAM) MAVS and prevents the interaction with RIGI. Interacts with TRIM25 to suppress TRIM25-mediated RIGI ubiquitination and thereby RIGI-MAVS interaction. Together with NS2, participates in the proteasomal degradation of host STAT2, IRF3, IRF7, TBK1 and RIGI through a NS-degradasome involving CUL2 and Elongin-C. The degradasome requires an intact mitochondrial MAVS. Decreases the levels of host TRAF3 and IKBKE/IKK-epsilon. As functions other than disruptions of the type I IFN-mediated antiviral signaling pathways, induces host SOCS1 and SOCS3 expression. Suppresses premature apoptosis by an NF-kappa-B-dependent, interferon-independent mechanism and thus facilitates virus growth. Additionally, NS1 may serve some inhibitory role in viral transcription and RNA replication. Suppresses proliferation and activation of host CD103+ CD8+ cytotoxic T-lymphocytes and Th17 helper T-lymphocytes. This chain is Non-structural protein 1 (1C), found in Ovis aries (Sheep).